A 1201-amino-acid polypeptide reads, in one-letter code: ATP-dependent helicase/deoxyribonuclease subunit B (1201 aa).

This sequence belongs to the helicase family. AddB/RexB type 2 subfamily. In terms of assembly, heterodimer of AddA and RexB. Requires Mg(2+) as cofactor.

Functionally, the heterodimer acts as both an ATP-dependent DNA helicase and an ATP-dependent, dual-direction single-stranded exonuclease. Recognizes the chi site generating a DNA molecule suitable for the initiation of homologous recombination. This subunit has 5' -&gt; 3' nuclease activity but not helicase activity. This chain is ATP-dependent helicase/deoxyribonuclease subunit B, found in Levilactobacillus brevis (strain ATCC 367 / BCRC 12310 / CIP 105137 / JCM 1170 / LMG 11437 / NCIMB 947 / NCTC 947) (Lactobacillus brevis).